Reading from the N-terminus, the 489-residue chain is Betaine aldehyde dehydrogenase (489 aa).

Residues Thr-26 and Asp-93 each coordinate K(+). 150–152 provides a ligand contact to NAD(+); the sequence is GAW. The Charge relay system role is filled by Lys-162. 176-179 lines the NAD(+) pocket; the sequence is KPSE. Val-180 serves as a coordination point for K(+). 229 to 232 lines the NAD(+) pocket; sequence GVET. Leu-245 contributes to the K(+) binding site. The active-site Proton acceptor is the Glu-251. Positions 253, 285, and 386 each coordinate NAD(+). The active-site Nucleophile is Cys-285. A Cysteine sulfenic acid (-SOH) modification is found at Cys-285. The K(+) site is built by Lys-456 and Gly-459. The active-site Charge relay system is Glu-463.

This sequence belongs to the aldehyde dehydrogenase family. As to quaternary structure, dimer of dimers. Requires K(+) as cofactor.

The enzyme catalyses betaine aldehyde + NAD(+) + H2O = glycine betaine + NADH + 2 H(+). The protein operates within amine and polyamine biosynthesis; betaine biosynthesis via choline pathway; betaine from betaine aldehyde: step 1/1. In terms of biological role, involved in the biosynthesis of the osmoprotectant glycine betaine. Catalyzes the irreversible oxidation of betaine aldehyde to the corresponding acid. This Burkholderia ambifaria (strain MC40-6) protein is Betaine aldehyde dehydrogenase.